A 54-amino-acid polypeptide reads, in one-letter code: U-reduvitoxin-Pr1a (54 aa).

A signal peptide spans 1 to 19 (MKLLGLLLLVFTFMALAFA). Disulfide bonds link cysteine 24–cysteine 39, cysteine 31–cysteine 44, and cysteine 38–cysteine 51.

Belongs to the venom Ptu1-like knottin family. Expressed by the venom gland (posterior main gland) (at protein level).

It localises to the secreted. In terms of biological role, binds reversibly and blocks P/Q-type voltage-gated calcium channels (Cav). This Platymeris rhadamanthus (Red spot assassin bug) protein is U-reduvitoxin-Pr1a.